The primary structure comprises 472 residues: Carboxypeptidase Q (472 aa).

The first 20 residues, 1-20 (MKFLIFAFFGGVHLLSLCSG), serve as a signal peptide directing secretion. The propeptide occupies 21-44 (KAIYKNGISKRTFEEIKEEIASYG). N-linked (GlcNAc...) asparagine glycans are attached at residues asparagine 61 and asparagine 179. Zn(2+) is bound by residues histidine 290 and aspartate 302. The active-site Nucleophile is glutamate 336. Glutamate 337 contributes to the Zn(2+) binding site. 2 N-linked (GlcNAc...) asparagine glycosylation sites follow: asparagine 353 and asparagine 356. Zn(2+) is bound at residue aspartate 364. Asparagine 396 is a glycosylation site (N-linked (GlcNAc...) asparagine). Residue histidine 434 participates in Zn(2+) binding.

This sequence belongs to the peptidase M28 family. Homodimer. The monomeric form is inactive while the homodimer is active. In terms of processing, N-glycosylated. The secreted form is modified by hybrid or complex type oligosaccharide chains.

The protein resides in the endoplasmic reticulum. It localises to the golgi apparatus. It is found in the lysosome. The protein localises to the secreted. Functionally, carboxypeptidase that may play an important role in the hydrolysis of circulating peptides. Catalyzes the hydrolysis of dipeptides with unsubstituted terminals into amino acids. May play a role in the liberation of thyroxine hormone from its thyroglobulin (Tg) precursor. The polypeptide is Carboxypeptidase Q (CPQ) (Pongo abelii (Sumatran orangutan)).